The sequence spans 811 residues: MALPLSTCLLFHPKESRSRRFCFSPASAASLKSGLHSATSAKIASMPTCFEQTRGRIAKLFHKDELSVSTYDTAWVAMVPSPTSLEEPCFPDCLNWLLENQCHDGSWARPHHHPLLKKDVLSSTLACILALKKWGVGEEQIKRGLHFLELNFASATDKCQITPMGFDIIFPAMLDYARGFSLNLRLDPTTFNDLMHKRDLELKRSNRNYSSETETYWAYIAEGMGELQNWESVMKYQRRNGSLFNCPSTTAAAFIALRNSDCLNYLHLALKKFGNAVSAVYPLDIYSQLCTVDNLERLGISQYFSTEIQNVLDETYRCWMQGNEEIFMDASTCALAFRTLRLNGYDVTSDPVTKILQECFSSSFRGNMTDINTTLELYRASELVLYPDERDLEKQNLRLKLLLEQELSSGLIQSCQLGRSINVLLISQVNQAIEYPFYAIMDRVAKRKSIEIYNFDNTRILKTSYCSPNFGNEDFHFLSIEDFNRCQAAHREELGELERWVVENRLDELKFARSKSAYCYFSAAATFFAPELLDARLSWAKNGVLTTVIDDFFDVGGSVEELKNLIQLVELWDVDICTECYSHNVQIIFSALRRTICEIGDKAFKLQGRCITNHIIAIWLDLLNSMMRETEWARDNFVPTIDEYMSNAHVSFALGPIVLPALYLVGPKLSEDMVNHSEYHNLFKLMSTCGRLLNDIHGYERELKDGKLNALSLYIINHGGEVSKEAAIWEMKSWIETQRRELLRLVLEGKKSVLPKPCRELFWHMCSVVHLFYSKGDGFTSQDLIQLVNTIIHQPILLNDQTGAGLSKLHD.

Residues 1 to 49 (MALPLSTCLLFHPKESRSRRFCFSPASAASLKSGLHSATSAKIASMPTC) constitute a chloroplast transit peptide. Mg(2+)-binding residues include Asp-550, Asp-554, Asn-694, and Glu-702. The DDXXD motif motif lies at 550-554 (DDFFD).

This sequence belongs to the terpene synthase family. The cofactor is Mg(2+).

The protein localises to the plastid. The protein resides in the chloroplast. It carries out the reaction ent-8alpha-hydroxylabd-13-en-15-yl diphosphate = ent-13-epi-manoyl oxide + diphosphate. It participates in secondary metabolite biosynthesis; terpenoid biosynthesis. Its function is as follows. Involved in diterpenoid biosynthesis. Catalyzes the conversion of ent-8alpha-hydroxylabd-13-en-15-yl diphosphate to ent-13-epi-manoyl oxide. The sequence is that of Ent-13-epi-manoyl oxide synthase KSL2, chloroplastic from Salvia miltiorrhiza (Chinese sage).